A 504-amino-acid polypeptide reads, in one-letter code: Pre-mRNA-processing factor 19 (504 aa).

N-acetylserine is present on serine 2. In terms of domain architecture, U-box spans 2–73 (SLICSISNEV…KPPSATSIPA (72 aa)). Residues 68–223 (ATSIPAILKA…VGLHSASIPG (156 aa)) are may mediate interaction with PSMC5. Residues lysine 122, lysine 179, lysine 244, and lysine 261 each carry the N6-acetyllysine modification. One copy of the WD 1 repeat lies at 219-259 (ASIPGILALDLCPSDTNKILTGGADKNVVVFDKSTEQILAT). 6 WD repeats span residues 262 to 301 (GHTK…CVQV), 304 to 345 (AHES…TKVT), 348 to 387 (TSGC…NVAN), 390 to 429 (GHSG…NFKT), 433 to 472 (DNNF…LHFT), and 473 to 503 (EHSG…KFYS).

The protein belongs to the WD repeat PRP19 family. Homotetramer. Component of activated, catalytic and post-catalytic spliceosomes. Component of the Prp19 complex/PRP19C/Nineteen complex/NTC and related complexes described as PRP19-CDC5L splicing complex and PSO4 complex. A homotetramer of PRPF19, CDC5L, PLRG1 and BCAS2 constitute the core of those complexes. The interaction with CDC5L, PLRG1 and BCAS2 is direct within this core complex. At least three less stably associated proteins CTNNBL1, CWC15 and HSPA8 are found in the Prp19 complex. The Prp19 complex associates with the spliceosome during its assembly and remodeling recruiting additional proteins. Component of the XAB2 complex, a multimeric protein complex composed of XAB2, PRPF19, AQR, ZNF830, ISY1, and PPIE. Interacts with CWC22 and EIF4A3 in an RNA-independent manner. Interacts with RPA1 and RPA2; the PRP19-CDC5L complex is recruited to the sites of DNA repair where it interacts with the replication protein A complex (RPA). Interacts with SETMAR; required for SETMAR recruitment to site of DNA damage. Interacts with U2AF2; the interaction is direct and recruits the Prp19 complex to RNA polymerase II C-terminal domain (CTD) and the pre-mRNA. Interacts with PRPF3. Interacts with APEX1, DNTT and PSMB4. Interacts with KNSTRN. Interacts with PSMC5. Isoform 2 (via N-terminus) interacts with PPIA. Isoform 2 does not interact with CDC5L. Interacts with KHDC4. Interacts with USB1. Interacts with DDX41. Expressed in white and brown adipose tissues, brain and to a lower extent in liver, kidney, muscle, lung and spleen (at protein level).

Its subcellular location is the nucleus. The protein localises to the nucleoplasm. It localises to the cytoplasm. It is found in the cytoskeleton. The protein resides in the spindle. Its subcellular location is the lipid droplet. The enzyme catalyses S-ubiquitinyl-[E2 ubiquitin-conjugating enzyme]-L-cysteine + [acceptor protein]-L-lysine = [E2 ubiquitin-conjugating enzyme]-L-cysteine + N(6)-ubiquitinyl-[acceptor protein]-L-lysine.. The protein operates within protein modification; protein ubiquitination. Functionally, ubiquitin-protein ligase which is a core component of several complexes mainly involved in pre-mRNA splicing and DNA repair. Required for pre-mRNA splicing as component of the spliceosome. Core component of the PRP19C/Prp19 complex/NTC/Nineteen complex which is part of the spliceosome and participates in its assembly, its remodeling and is required for its activity. During assembly of the spliceosome, mediates 'Lys-63'-linked polyubiquitination of the U4 spliceosomal protein PRPF3. Ubiquitination of PRPF3 allows its recognition by the U5 component PRPF8 and stabilizes the U4/U5/U6 tri-snRNP spliceosomal complex. Recruited to RNA polymerase II C-terminal domain (CTD) and the pre-mRNA, it may also couple the transcriptional and spliceosomal machineries. The XAB2 complex, which contains PRPF19, is also involved in pre-mRNA splicing, transcription and transcription-coupled repair. Beside its role in pre-mRNA splicing PRPF19, as part of the PRP19-CDC5L complex, plays a role in the DNA damage response/DDR. It is recruited to the sites of DNA damage by the RPA complex where PRPF19 directly ubiquitinates RPA1 and RPA2. 'Lys-63'-linked polyubiquitination of the RPA complex allows the recruitment of the ATR-ATRIP complex and the activation of ATR, a master regulator of the DNA damage response. May also play a role in DNA double-strand break (DSB) repair by recruiting the repair factor SETMAR to altered DNA. As part of the PSO4 complex may also be involved in the DNA interstrand cross-links/ICLs repair process. In addition, may also mediate 'Lys-48'-linked polyubiquitination of substrates and play a role in proteasomal degradation. May play a role in the biogenesis of lipid droplets. May play a role in neural differentiation possibly through its function as part of the spliceosome. In terms of biological role, forced expression leads to suppression of neuronal differentiation, and on the contrary to stimulation of astroglial cell differentiation in retinoic acid-primed P19 cells. The sequence is that of Pre-mRNA-processing factor 19 from Mus musculus (Mouse).